The primary structure comprises 235 residues: NADH-quinone oxidoreductase subunit C (235 aa).

Belongs to the complex I 30 kDa subunit family. NDH-1 is composed of 14 different subunits. Subunits NuoB, C, D, E, F, and G constitute the peripheral sector of the complex.

It is found in the cell membrane. It carries out the reaction a quinone + NADH + 5 H(+)(in) = a quinol + NAD(+) + 4 H(+)(out). Its function is as follows. NDH-1 shuttles electrons from NADH, via FMN and iron-sulfur (Fe-S) centers, to quinones in the respiratory chain. The immediate electron acceptor for the enzyme in this species is believed to be a menaquinone. Couples the redox reaction to proton translocation (for every two electrons transferred, four hydrogen ions are translocated across the cytoplasmic membrane), and thus conserves the redox energy in a proton gradient. This chain is NADH-quinone oxidoreductase subunit C, found in Mycobacterium avium (strain 104).